Here is a 142-residue protein sequence, read N- to C-terminus: Hemoglobin subunit alpha-3 (142 aa).

In terms of domain architecture, Globin spans Thr-2–Arg-142. O2 is bound at residue His-59. His-88 contributes to the heme b binding site.

It belongs to the globin family. In terms of assembly, heterotetramer of two alpha chains and two beta chains. In terms of tissue distribution, red blood cells.

This is a larval (tadpole) alpha-globin. The polypeptide is Hemoglobin subunit alpha-3 (hba3) (Xenopus laevis (African clawed frog)).